Consider the following 253-residue polypeptide: Probable U2 small nuclear ribonucleoprotein A' (253 aa).

LRR repeat units follow at residues Asn-20–Arg-41, Gln-43–Ser-64, Arg-65–Lys-86, and Asn-89–Ala-110. The region spanning Asn-123–Met-161 is the LRRCT domain. 2 disordered regions span residues Lys-163–Glu-205 and Val-232–Ser-253. Positions Lys-169–Asp-182 are enriched in basic and acidic residues.

It belongs to the U2 small nuclear ribonucleoprotein A family. In terms of assembly, interacts with rnp-3.

It localises to the nucleus. This protein is associated with sn-RNP U2. It helps the A' protein to bind stem loop IV of U2 snRNA. Required maternally for early embryonic development and zygotically for germline and somatic development. Has a role in the switch from mitosis to meiosis. Might function in alternative splicing. The chain is Probable U2 small nuclear ribonucleoprotein A' (mog-2) from Caenorhabditis elegans.